The primary structure comprises 459 residues: Cysteine--tRNA ligase (459 aa).

Cys29 lines the Zn(2+) pocket. A 'HIGH' region motif is present at residues 31–41 (VTTYDYCHIGH). Residues Cys210, His235, and Glu239 each coordinate Zn(2+). The short motif at 267 to 271 (KMSKS) is the 'KMSKS' region element. Lys270 is an ATP binding site.

Belongs to the class-I aminoacyl-tRNA synthetase family. Monomer. Zn(2+) is required as a cofactor.

It is found in the cytoplasm. The catalysed reaction is tRNA(Cys) + L-cysteine + ATP = L-cysteinyl-tRNA(Cys) + AMP + diphosphate. The chain is Cysteine--tRNA ligase from Idiomarina loihiensis (strain ATCC BAA-735 / DSM 15497 / L2-TR).